The chain runs to 525 residues: CTP synthase (525 aa).

Residues 1 to 269 (MKYIIVTGGV…ADAITTHLHL (269 aa)) form an amidoligase domain region. S12 contributes to the CTP binding site. Position 12 (S12) interacts with UTP. ATP is bound by residues 13-18 (GLGKGI) and D70. Mg(2+)-binding residues include D70 and E144. CTP-binding positions include 151–153 (DIE), 190–195 (KTKPTQ), and K226. Residues 190–195 (KTKPTQ) and K226 each bind UTP. Residues 292–524 (VAIVSKYGIE…VSACRKNKKT (233 aa)) form the Glutamine amidotransferase type-1 domain. G348 provides a ligand contact to L-glutamine. The active-site Nucleophile; for glutamine hydrolysis is C375. Residues 376 to 379 (LGFQ), E399, and R454 each bind L-glutamine. Catalysis depends on residues H497 and E499.

This sequence belongs to the CTP synthase family. In terms of assembly, homotetramer.

It carries out the reaction UTP + L-glutamine + ATP + H2O = CTP + L-glutamate + ADP + phosphate + 2 H(+). It catalyses the reaction L-glutamine + H2O = L-glutamate + NH4(+). The enzyme catalyses UTP + NH4(+) + ATP = CTP + ADP + phosphate + 2 H(+). The protein operates within pyrimidine metabolism; CTP biosynthesis via de novo pathway; CTP from UDP: step 2/2. With respect to regulation, allosterically activated by GTP, when glutamine is the substrate; GTP has no effect on the reaction when ammonia is the substrate. The allosteric effector GTP functions by stabilizing the protein conformation that binds the tetrahedral intermediate(s) formed during glutamine hydrolysis. Inhibited by the product CTP, via allosteric rather than competitive inhibition. In terms of biological role, catalyzes the ATP-dependent amination of UTP to CTP with either L-glutamine or ammonia as the source of nitrogen. Regulates intracellular CTP levels through interactions with the four ribonucleotide triphosphates. The chain is CTP synthase from Methanosphaerula palustris (strain ATCC BAA-1556 / DSM 19958 / E1-9c).